The sequence spans 207 residues: Dephospho-CoA kinase (207 aa).

Residues 10–207 (ILGLTGGIGS…FYLTLRGGQS (198 aa)) form the DPCK domain. 18–23 (GSGKSA) lines the ATP pocket.

Belongs to the CoaE family.

It localises to the cytoplasm. It catalyses the reaction 3'-dephospho-CoA + ATP = ADP + CoA + H(+). Its pathway is cofactor biosynthesis; coenzyme A biosynthesis; CoA from (R)-pantothenate: step 5/5. Catalyzes the phosphorylation of the 3'-hydroxyl group of dephosphocoenzyme A to form coenzyme A. This Pseudomonas syringae pv. syringae (strain B728a) protein is Dephospho-CoA kinase.